The chain runs to 328 residues: Fructokinase-2 (328 aa).

The protein belongs to the carbohydrate kinase PfkB family.

The catalysed reaction is D-fructose + ATP = D-fructose 6-phosphate + ADP + H(+). The protein operates within glycan biosynthesis; starch biosynthesis. In terms of biological role, may play an important role in maintaining the flux of carbon towards starch formation. This is Fructokinase-2 (FRK2) from Solanum lycopersicum (Tomato).